Consider the following 27-residue polypeptide: Secretin (27 aa).

V27 is modified (valine amide).

This sequence belongs to the glucagon family.

It localises to the secreted. Its function is as follows. Hormone involved in different processes, such as regulation of the pH of the duodenal content, food intake and water homeostasis. Exerts its biological effects by binding to secretin receptor (SCTR), a G-protein coupled receptor expressed in the basolateral domain of several cells. Acts as a key gastrointestinal hormone by regulating the pH of the duodenal content. Secreted by S cells of the duodenum in the crypts of Lieberkuehn and regulates the pH of the duodenum by (1) inhibiting the secretion of gastric acid from the parietal cells of the stomach and (2) stimulating the production of bicarbonate (NaHCO(3)) from the ductal cells of the pancreas. Production of bicarbonate is essential to neutralize the pH and ensure no damage is done to the small intestine by the gastric acid. In addition to regulating the pH of the duodenal content, plays a central role in diet induced thermogenesis: acts as a non-sympathetic brown fat (BAT) activator mediating prandial thermogenesis, which consequentially induces satiation. Mechanistically, secretin released by the gut after a meal binds to secretin receptor (SCTR) in brown adipocytes, activating brown fat thermogenesis by stimulating lipolysis, which is sensed in the brain and promotes satiation. Also able to stimulate lipolysis in white adipocytes. Also plays an important role in cellular osmoregulation: released into the systemic circulation in response to hyperosmolality and acts at different levels in the hypothalamus, pituitary and kidney to regulate water homeostasis. Also plays a role in the central nervous system, possibly by acting as a neuropeptide hormone: required for hippocampal synaptic function and neural progenitor cells maintenance. This Canis lupus familiaris (Dog) protein is Secretin.